An 86-amino-acid polypeptide reads, in one-letter code: Neurotoxin 3FTx-RK (86 aa).

The first 21 residues, 1–21 (MKTLLLTLVVVTIVCLELGYT), serve as a signal peptide directing secretion. Cystine bridges form between C24–C45, C38–C63, C67–C78, and C79–C84.

In terms of tissue distribution, expressed by the venom gland.

It is found in the secreted. The chain is Neurotoxin 3FTx-RK from Bungarus fasciatus (Banded krait).